The primary structure comprises 214 residues: Triosephosphate isomerase (214 aa).

6 to 8 (NLK) is a binding site for substrate. The active-site Electrophile is the H85. The active-site Proton acceptor is E133. Substrate contacts are provided by residues I138, G173, and 194 to 195 (AS).

The protein belongs to the triosephosphate isomerase family. Homotetramer; dimer of dimers.

The protein localises to the cytoplasm. It catalyses the reaction D-glyceraldehyde 3-phosphate = dihydroxyacetone phosphate. It functions in the pathway carbohydrate biosynthesis; gluconeogenesis. The protein operates within carbohydrate degradation; glycolysis; D-glyceraldehyde 3-phosphate from glycerone phosphate: step 1/1. Involved in the gluconeogenesis. Catalyzes stereospecifically the conversion of dihydroxyacetone phosphate (DHAP) to D-glyceraldehyde-3-phosphate (G3P). This chain is Triosephosphate isomerase, found in Halobacterium salinarum (strain ATCC 700922 / JCM 11081 / NRC-1) (Halobacterium halobium).